The chain runs to 491 residues: MPERPPIRALRRDPDDPAVAQALASLARGSDLVFPSRFQKWLRDFRQVHAHRKEEPPPQSPPPGHTVPAFYFPCGRPPPRPQDTEDAIALVECAFEGLPRGRAGLGDMAVVAKACGCPLYWKAPLFYAAGGERTGSVSVHMFVAMWRKVLLTCHDDAARFVRLLGHPGCSGLIQEDFVPFLQDVVNSHPGLAFLRAAKDFHSRYITTVIQRIFYTVNRSWSGMISREELRRSSFLQAVSQLEVEPDINRMTSFFSYEHFYVIYCKFWELDLDRDLTIDRSDLARHGDGAISSRMIDRIFSGAVTRARLPRKVGKLSYADFVWFLLSEEDKTTPTSTEYWFRCMDLDGDGALSMFELEFFYEEQAQRMAARGVEPLPFHDLARQVLDLVAPRCPGRITLRDLKQCGLAGEFFDAFFNVDKYLAREQREQAGTPQDTDSDPAASAWDRYAAEEYDFLVAEEAMAEDDDDHDEGSDPIDLYGLADEDCDDLEPL.

The EF-hand domain occupies 331-366 (TTPTSTEYWFRCMDLDGDGALSMFELEFFYEEQAQR). 4 residues coordinate Ca(2+): D344, D346, D348, and E355. 2 stretches are compositionally biased toward acidic residues: residues 460–473 (AMAE…EGSD) and 481–491 (ADEDCDDLEPL). The tract at residues 460–491 (AMAEDDDDHDEGSDPIDLYGLADEDCDDLEPL) is disordered.

As to quaternary structure, PP2A consists of a common heterodimeric core enzyme, composed of a 36 kDa catalytic subunit (subunit C) and a 65 kDa constant regulatory subunit (PR65 or subunit A), that associates with a variety of regulatory subunits. Proteins that associate with the core dimer include three families of regulatory subunits B (the R2/B/PR55/B55, R3/B''/PR72/PR130/PR59 and R5/B'/B56 families), the 48 kDa variable regulatory subunit, viral proteins, and cell signaling molecules. As to expression, expressed in testis, kidney, liver, lung, spleen, brain and heart.

Functionally, the B regulatory subunit might modulate substrate selectivity and catalytic activity, and might also direct the localization of the catalytic enzyme to a particular subcellular compartment. Interacts with retinoblastoma-related protein p107 (in vivo). May target PP2A core dimer to p107 resulting in dephosphorylation of p107. This is Serine/threonine-protein phosphatase 2A regulatory subunit B'' subunit delta (Ppp2r3d) from Mus musculus (Mouse).